Reading from the N-terminus, the 361-residue chain is Probable cinnamyl alcohol dehydrogenase (361 aa).

Cys48 serves as a coordination point for Zn(2+). Thr50 provides a ligand contact to NADP(+). The Zn(2+) site is built by His70, Glu71, Cys101, Cys104, Cys107, Cys115, and Cys164. NADP(+) is bound by residues Thr168, 189–194 (GLGGVG), 212–217 (SSSDKK), Thr252, Gly276, and 299–301 (SFI).

The protein belongs to the zinc-containing alcohol dehydrogenase family. As to quaternary structure, homodimer. Zn(2+) serves as cofactor.

The enzyme catalyses (E)-cinnamyl alcohol + NADP(+) = (E)-cinnamaldehyde + NADPH + H(+). The catalysed reaction is (E)-coniferol + NADP(+) = (E)-coniferaldehyde + NADPH + H(+). It carries out the reaction (E)-sinapyl alcohol + NADP(+) = (E)-sinapaldehyde + NADPH + H(+). It catalyses the reaction (E)-4-coumaroyl alcohol + NADP(+) = (E)-4-coumaraldehyde + NADPH + H(+). The enzyme catalyses (E)-caffeyl alcohol + NADP(+) = (E)-caffeyl aldehyde + NADPH + H(+). It functions in the pathway aromatic compound metabolism; phenylpropanoid biosynthesis. Functionally, involved in lignin biosynthesis. Catalyzes the final step specific for the production of lignin monomers. Catalyzes the NADPH-dependent reduction of coniferaldehyde, 5-hydroxyconiferaldehyde, sinapaldehyde, 4-coumaraldehyde and caffeyl aldehyde to their respective alcohols. This is Probable cinnamyl alcohol dehydrogenase from Lolium perenne (Perennial ryegrass).